Reading from the N-terminus, the 976-residue chain is 5'-3' exoribonuclease 2 homolog (976 aa).

Residues 264–281 (RACELCGQYGHELKECRG) form a CCHC-type zinc finger. Basic and acidic residues predominate over residues 411-420 (DEERFKENQK). The segment at 411-442 (DEERFKENQKNKKARMQQYGRGRGGRGRGRGQ) is disordered. An interaction with paxt-1 region spans residues 535–788 (DIRLYESGWK…GICVLYEDPE (254 aa)). Positions 815–976 (WNERRDGRFN…GGYQGNSSWR (162 aa)) are disordered. The segment covering 856-866 (DRQGGNDNYRG) has biased composition (low complexity).

This sequence belongs to the 5'-3' exonuclease family. XRN2/RAT1 subfamily. As to quaternary structure, interacts with paxt-1 (via N-terminus); the interaction is direct and results in stabilization of xrn-2 in the complex.

The protein resides in the nucleus. In terms of biological role, possesses 5'-&gt;3' exoribonuclease activity. Plays a role in maintenance of steady-state concentration and turnover of microRNAs (miRNA) by degradation of mature miRNA. Degradation role is enhanced when in complex with paxt-1. Partially redundant to xrn-1 in miRNA guide strand degradation. Implicated in differential regulation of mRNAs such as let-7 by controlling the accumulation of mature miRNA. Positively regulates molting of the pharyngeal cuticle. The chain is 5'-3' exoribonuclease 2 homolog from Caenorhabditis briggsae.